The primary structure comprises 711 residues: MTQNPKRYTITAALPYTNGPIHIGHLAGVYVPADIYSRYLRLQGKDVAFICGSDEHGVAISMKAKKEGVTPQEVIDKYDGIIRKSFADFGISFNNYSRTSAKIHHDTASEFFRTLYDKGDFIEEVTEQLYDAKANQFLADRFVVGTCPKCDNPEAYGDQCEKCGSTLNATDLINPKSTITGETPILKETKHWFLPLDRYSDFLTKWILEGHKNDWKPNVYGQVKSWIDGGLEPRAVTRDLDWGIDVPVEGAEGKKLYVWFDAPIGYISSTKEWAAREGKDWEPYWKDEETKLVHFIGKDNIVFHCIIFPAMLKAEGSYILPDNVPANEFLNLEGNKLSTSKNWAVWLHEYLEEFPDKQDVLRYALTSNAPETKDNDFTWKDFQARNNNELVAIFGNFVNRVVVLTNKYYDGVIPTPNEFTEIDEQTLAELKAYPAVISSSVERYRFREALGELMNVARLGNKYLADEEPWKVMKDNPERVKTQMYVALQIAAALSVLAEPFLPFTAAKLSKILNLGDLKEHFEGFSKFLKERHQDANDIIIDKTLGWNDISENSDLIPAGHKIGEAELLFAKIEDEEIQKQIDKLEATKTANIAENQKAEPQKDLIQFEDFAKMDIRIGTILEAEKMPKANKLLVLKVDTGIDVRTIVSGIAESFSPEEIIGKRVSVLANLAPRALRGVESQGMILMTTNAEGKLVFVNPDADAPNGATVN.

The short motif at 15-25 (PYTNGPIHIGH) is the 'HIGH' region element. Residues C147, C150, C160, and C163 each contribute to the Zn(2+) site. The short motif at 336–340 (KLSTS) is the 'KMSKS' region element. T339 contributes to the ATP binding site. The 102-residue stretch at 610–711 (DFAKMDIRIG…ADAPNGATVN (102 aa)) folds into the tRNA-binding domain.

This sequence belongs to the class-I aminoacyl-tRNA synthetase family. MetG type 1 subfamily. Homodimer. The cofactor is Zn(2+).

The protein localises to the cytoplasm. It catalyses the reaction tRNA(Met) + L-methionine + ATP = L-methionyl-tRNA(Met) + AMP + diphosphate. Functionally, is required not only for elongation of protein synthesis but also for the initiation of all mRNA translation through initiator tRNA(fMet) aminoacylation. This chain is Methionine--tRNA ligase, found in Flavobacterium johnsoniae (strain ATCC 17061 / DSM 2064 / JCM 8514 / BCRC 14874 / CCUG 350202 / NBRC 14942 / NCIMB 11054 / UW101) (Cytophaga johnsonae).